The sequence spans 240 residues: Probable transcriptional regulatory protein MADE_1004275 (240 aa).

It belongs to the TACO1 family.

The protein resides in the cytoplasm. This chain is Probable transcriptional regulatory protein MADE_1004275, found in Alteromonas mediterranea (strain DSM 17117 / CIP 110805 / LMG 28347 / Deep ecotype).